We begin with the raw amino-acid sequence, 332 residues long: Phospho-N-acetylmuramoyl-pentapeptide-transferase (332 aa).

10 helical membrane passes run 3-23 (FALMSGLVAFLATVLLIPRFI), 52-72 (MGGTVFLVVAILVSLLFATAF), 74-94 (LLTGGVLAILFILALYGVVGF), 115-135 (LALQILGGIVFYFVHVRGAGG), 140-160 (VFGHMVHLGVLYFPFVLFWLV), 172-192 (IDGLASISVVISLLAYSVIAF), 197-217 (FDILLVCVTMIGGLLGFFVYN), 223-243 (IFMGDVGSLALGGMLATISIA), 248-268 (WTLLLIGLVYVIETSSVMLQV), and 311-331 (VDFFLWSVGLIMSLITLAILY).

It belongs to the glycosyltransferase 4 family. MraY subfamily. It depends on Mg(2+) as a cofactor.

The protein localises to the cell membrane. The enzyme catalyses UDP-N-acetyl-alpha-D-muramoyl-L-alanyl-gamma-D-glutamyl-L-lysyl-D-alanyl-D-alanine + di-trans,octa-cis-undecaprenyl phosphate = Mur2Ac(oyl-L-Ala-gamma-D-Glu-L-Lys-D-Ala-D-Ala)-di-trans,octa-cis-undecaprenyl diphosphate + UMP. It participates in cell wall biogenesis; peptidoglycan biosynthesis. Functionally, catalyzes the initial step of the lipid cycle reactions in the biosynthesis of the cell wall peptidoglycan: transfers peptidoglycan precursor phospho-MurNAc-pentapeptide from UDP-MurNAc-pentapeptide onto the lipid carrier undecaprenyl phosphate, yielding undecaprenyl-pyrophosphoryl-MurNAc-pentapeptide, known as lipid I. The chain is Phospho-N-acetylmuramoyl-pentapeptide-transferase from Streptococcus suis (strain 98HAH33).